A 122-amino-acid polypeptide reads, in one-letter code: Large ribosomal subunit protein bL19 (122 aa).

This sequence belongs to the bacterial ribosomal protein bL19 family.

In terms of biological role, this protein is located at the 30S-50S ribosomal subunit interface and may play a role in the structure and function of the aminoacyl-tRNA binding site. This chain is Large ribosomal subunit protein bL19, found in Acinetobacter baumannii (strain AB307-0294).